Consider the following 554-residue polypeptide: Neutral amino acid transporter 9 (554 aa).

Over 1–112 (MDSDQTPLIN…GSDGTGKNSS (112 aa)) the chain is Cytoplasmic. Residues 113-133 (IVTIFMIWNTMMGTSILSIPW) form a helical membrane-spanning segment. Residues 122 to 127 (TMMGTS) form an important for arginine binding and amino acid transport region. S127 lines the arginine pocket. The Lumenal segment spans residues 134-139 (GIKQAG). The helical transmembrane segment at 140 to 160 (FTTGVCILFLMGILTLYCCYR) threads the bilayer. The Cytoplasmic portion of the chain corresponds to 161–191 (VVKSRGTIPLTDTSNWEFPDVCQYYFGSFGR). Residues 192 to 218 (WSSLLFSLVSLIGAMIVYWVLMSNFLF) form a helical membrane-spanning segment. Topologically, residues 219-276 (NTGKFIYNYVNDVNVTDDVLSNNGSDKVICPNPDSTRPLNKSMDTYFGNGTNYEQFET) are lumenal. N-linked (GlcNAc...) asparagine glycans are attached at residues N232, N241, N258, and N267. Cysteines 248 and 417 form a disulfide. The helical transmembrane segment at 277 to 293 (WWSKTNTVPFYLVVLLL) threads the bilayer. Residues 294-302 (PLLSFRSPS) are Cytoplasmic-facing. Residues 303–327 (FFAKFNILGTVSIIYLVSLVTLKAA) form a helical membrane-spanning segment. Residues 328-349 (HLGFHLRFSWNQVQEFFVPEFR) lie on the Lumenal side of the membrane. Residues 350 to 370 (LSFPQLTGILTLAFFIHNCII) traverse the membrane as a helical segment. Residues 371–387 (TLLKNNRNQKNNVRDLS) lie on the Cytoplasmic side of the membrane. Residues 388–408 (IAYLLVGLTYIYVGVAVFASF) traverse the membrane as a helical segment. Residues 409–430 (PSPPLSKQCIQQNFLDNFPSSD) lie on the Lumenal side of the membrane. A helical transmembrane segment spans residues 431–451 (ILAFVARIFLLFQMMTVYPLL). The short motif at 437–447 (RIFLLFQMMTV) is the CARC motif element. A CRAC motif motif is present at residues 450–456 (LLGYLVR). Residues 452–472 (GYLVRVQLLGHIFGDIYPSVF) lie on the Cytoplasmic side of the membrane. Residues 473 to 493 (HVLALNIAVVGVGVIMARFYP) traverse the membrane as a helical segment. Topologically, residues 494 to 500 (NIGGIIR) are lumenal. Residues 501–521 (FSGAACGLAFVFVYPSLIHMI) form a helical membrane-spanning segment. Residues 522 to 533 (SLHRRGQLKVHS) are Cytoplasmic-facing. Residues 534 to 554 (ILIHVSIIVLGIANLIAQFFM) traverse the membrane as a helical segment.

Belongs to the amino acid/polyamine transporter 2 family. SLC38A9 subfamily. As to quaternary structure, associated component of the Ragulator complex. Associated component of the Rag GTPases heterodimers. Glycosylated.

It localises to the lysosome membrane. Its subcellular location is the late endosome membrane. The catalysed reaction is L-leucine(in) = L-leucine(out). It carries out the reaction L-tyrosine(in) = L-tyrosine(out). The enzyme catalyses L-glutamine(out) = L-glutamine(in). It catalyses the reaction L-asparagine(out) = L-asparagine(in). Lysosomal amino acid transporter involved in the activation of mTORC1 in response to amino acid levels. Probably acts as an amino acid sensor of the Rag GTPases and Ragulator complexes, 2 complexes involved in amino acid sensing and activation of mTORC1, a signaling complex promoting cell growth in response to growth factors, energy levels, and amino acids. Following activation by amino acids, the Ragulator and Rag GTPases function as a scaffold recruiting mTORC1 to lysosomes where it is in turn activated. SLC38A9 mediates transport of amino acids with low capacity and specificity with a slight preference for polar amino acids. Acts as an arginine sensor. Following activation by arginine binding, mediates transport of L-glutamine, leucine and tyrosine with high efficiency, and is required for the efficient utilization of these amino acids after lysosomal protein degradation. However, the transport mechanism is not well defined and the role of sodium is not clear. Guanine exchange factor (GEF) that, upon arginine binding, stimulates GDP release from RRAGA and therefore activates the Rag GTPase heterodimer and the mTORC1 pathway in response to nutrient sufficiency. The chain is Neutral amino acid transporter 9 from Xenopus tropicalis (Western clawed frog).